Reading from the N-terminus, the 1411-residue chain is MSAPVGPRGRLAPIPAASQPPLQPEMPDLSHLTEEERKIILAVMDRQKKKVKEEHKPQLTQWFPFSGITELVNNVLQPQQKQQNEKEPQTKLHQQFEMYKEQVKKMGEESQQQQEQKGDAPTCGICHKTKFADGCGHNCSYCQTKFCARCGGRVSLRSNKVMWVCNLCRKQQEILTKSGAWFYNSGSNTPQQPDQKVLRGLRNEEAPQEKKPKLHEQTQFQGPSGDLSVPAVEKSRSHGLTRQHSIKNGSGVKHHIASDIASDRKRSPSVSRDQNRRYDQREEREEYSQYATSDTAMPRSPSDYADRRSQHEPQFYEDSDHLSYRDSNRRSHRHSKEYIVDDEDVESRDEYERQRREEEYQSRYRSDPNLARYPVKPQPYEEQMRIHAEVSRARHERRHSDVSLANADLEDSRISMLRMDRPSRQRSISERRAAMENQRSYSMERTREAQGPSSYAQRTTNHSPPTPRRSPLPIDRPDLRRTDSLRKQHHLDPSSAVRKTKREKMETMLRNDSLSSDQSESVRPPPPKPHKSKKGGKMRQISLSSSEEELASTPEYTSCDDVEIESESVSEKGDSQKGKRKTSEQAVLSDSNTRSERQKEMMYFGGHSLEEDLEWSEPQIKDSGVDTCSSTTLNEEHSHSDKHPVTWQPSKDGDRLIGRILLNKRLKDGSVPRDSGAMLGLKVVGGKMTESGRLCAFITKVKKGSLADTVGHLRPGDEVLEWNGRLLQGATFEEVYNIILESKPEPQVELVVSRPIGDIPRIPDSTHAQLESSSSSFESQKMDRPSISVTSPMSPGMLRDVPQFLSGQLSIKLWFDKVGHQLIVTILGAKDLPSREDGRPRNPYVKIYFLPDRSDKNKRRTKTVKKTLEPKWNQTFIYSPVHRREFRERMLEITLWDQARVREEESEFLGEILIELETALLDDEPHWYKLQTHDVSSLPLPHPSPYMPRRQLHGESPTRRLQRSKRISDSEVSDYDCDDGIGVVSDYRHDGRDLQSSTLSVPEQVMSSNHCSPSGSPHRVDVIGRTRSWSPSVPPPQSRNVEQGLRGTRTMTGHYNTISRMDRHRVMDDHYSPDRDRDCEAADRQPYHRSRSTEQRPLLERTTTRSRSTERPDTNLMRSMPSLMTGRSAPPSPALSRSHPRTGSVQTSPSSTPVAGRRGRQLPQLPPKGTLDRKAGGKKLRSTVQRSTETGLAVEMRNWMTRQASRESTDGSMNSYSSEGNLIFPGVRLASDSQFSDFLDGLGPAQLVGRQTLATPAMGDIQVGMMDKKGQLEVEIIRARGLVVKPGSKTLPAPYVKVYLLDNGVCIAKKKTKVARKTLEPLYQQLLSFEESPQGKVLQIIVWGDYGRMDHKSFMGVAQILLDELELSNMVIGWFKLFPPSSLVDPTLAPLTRRASQSSLESSTGPSYSRS.

A disordered region spans residues M1–T33. A RabBD domain is found at M26–S185. The segment at K117–E173 adopts an FYVE-type zinc-finger fold. Zn(2+) is bound by residues C123, C126, C139, C142, C147, C150, C165, and C168. 6 stretches are compositionally biased toward basic and acidic residues: residues N203 to E216, D273 to Y287, D318 to R329, R348 to S366, E382 to D401, and E410 to A434. Disordered stretches follow at residues N203–Q598 and S623–S650. S400 carries the phosphoserine modification. Polar residues predominate over residues G451–S463. A compositionally biased stretch (basic and acidic residues) spans D475 to D492. Over residues R510–S521 the composition is skewed to polar residues. A compositionally biased stretch (basic residues) spans K528–K537. The span at S558 to S568 shows a compositional bias: acidic residues. Composition is skewed to basic and acidic residues over residues V569–S583 and N634–P644. The region spanning D668 to R754 is the PDZ domain. T689 bears the Phosphothreonine mark. Positions I762–M793 are disordered. 2 positions are modified to phosphoserine: S791 and S794. One can recognise a C2 1 domain in the interval L805–Y928. 2 disordered regions span residues P939–S973 and D993–T1190. Composition is skewed to polar residues over residues L994–G1015 and R1049–S1059. Residues R1060–D1113 show a composition bias toward basic and acidic residues. A compositionally biased stretch (polar residues) spans G1143–P1153. Residue S1148 is modified to Phosphoserine. The 119-residue stretch at A1257–F1375 folds into the C2 2 domain. Phosphoserine occurs at positions 1396 and 1399.

Interacts with RAB3A and RAB3B that have been activated by GTP-binding. Interacts with RAB3C, RAB3D and RAB26. Interacts with TSPOAP1 and RIMBP2. Interacts with PPFIA3 and PPFIA4. Interacts via its zinc finger with the first C2 domain of UNC13A. Forms a complex consisting of UNC13A, RIMS2 and RAB3A. Heterodimer with PCLO. Part of a ternary complex involving PCLO and EPAC2. Widely expressed. Expressed in melanocytes. In fetal tissues, predominantly expressed in the brain. In the retina, expressed in the outer plexiform layer (at protein level). In the cerebellum, expressed in Purkinje cells (at protein level). In the pancreas, expressed in Langerhans islets (at protein level).

Its subcellular location is the cell membrane. The protein localises to the synapse. It is found in the presynaptic cell membrane. Its function is as follows. Rab effector involved in exocytosis. May act as scaffold protein. Plays a role in dendrite formation by melanocytes. The protein is Regulating synaptic membrane exocytosis protein 2 (RIMS2) of Homo sapiens (Human).